A 590-amino-acid chain; its full sequence is Negative elongation factor D (590 aa).

The tract at residues 15 to 43 is disordered; that stretch reads FGSAAEWGDEADGGQQEDDYGEGEDDAEV. Residues 21 to 43 show a composition bias toward acidic residues; the sequence is WGDEADGGQQEDDYGEGEDDAEV.

Belongs to the NELF-D family. In terms of assembly, the NELF complex is composed of NELFA, NELFB, NELFCD and NELFE; NELFA and NELFCD form a stable subcomplex that binds primarily through NELFCD to the N-terminus of NELFB. Binds RNA which may help to stabilize the NELF complex on nucleic acid. In vitro, the NELFA:NELFCD subcomplex binds to ssDNA and ssRNA in a sequence- and structure-dependent manner. Interacts with ARAF1. Interacts with PCF11. Interacts with NELFB. Interacts with KAT8.

It is found in the nucleus. Essential component of the NELF complex, a complex that negatively regulates the elongation of transcription by RNA polymerase II. The NELF complex, which acts via an association with the DSIF complex and causes transcriptional pausing, is counteracted by the P-TEFb kinase complex. This Sus scrofa (Pig) protein is Negative elongation factor D (NELFCD).